The sequence spans 404 residues: Synaptic vesicle membrane protein VAT-1 homolog (404 aa).

Positions 1-55 are disordered; that stretch reads MSAEREATEAATVAAAAEARAETGAGEGAPSQPPTVEVASDPQPPPAPEASASAS. At S2 the chain carries N-acetylserine. S2 is modified (phosphoserine). Residues 9–24 show a composition bias toward low complexity; the sequence is EAATVAAAAEARAETG. Phosphoserine occurs at positions 31 and 40.

This sequence belongs to the zinc-containing alcohol dehydrogenase family. Quinone oxidoreductase subfamily. In terms of assembly, interacts with MFN1 and MFN2. In terms of tissue distribution, ubiquitously expressed.

It localises to the cytoplasm. The protein resides in the mitochondrion outer membrane. Its function is as follows. Plays a part in calcium-regulated keratinocyte activation in epidermal repair mechanisms. Has no effect on cell proliferation. Possesses ATPase activity. May negatively regulate mitochondrial fusion. This Rattus norvegicus (Rat) protein is Synaptic vesicle membrane protein VAT-1 homolog (Vat1).